We begin with the raw amino-acid sequence, 2690 residues long: Probable polyketide synthase 28 (2690 aa).

Residues 15 to 443 enclose the Ketosynthase family 3 (KS3) domain; the sequence is YGDVAVIGIG…GSNVCLILSE (429 aa). Catalysis depends on for beta-ketoacyl synthase activity residues Cys187, His326, and His366. The acyl/malonyl transferases stretch occupies residues 651 to 684; that stretch reads GVSADIIVGHSLGELSSSYSSGMIDFETLCHLIY. The active-site For acyl/malonyl transferase activity is Ser661. Residues 906-934 adopt a coiled-coil conformation; that stretch reads NFKSQLTNINNNNNNINNNNNNNNNNNNN. Positions 916–946 are disordered; it reads NNNNNINNNNNNNNNNNNNNNNNNNNNNNNN. An N-terminal hotdog fold region spans residues 973-1102; it reads HEKITNEGPS…GNFSLFKHNS (130 aa). Residues 973–1285 enclose the PKS/mFAS DH domain; that stretch reads HEKITNEGPS…CSSVSLANPS (313 aa). Residue His1014 is the Proton acceptor; for dehydratase activity of the active site. Positions 1119–1285 are C-terminal hotdog fold; the sequence is NFTTISKHDF…CSSVSLANPS (167 aa). Catalysis depends on Asp1188, which acts as the Proton donor; for dehydratase activity. The disordered stretch occupies residues 1401-1429; the sequence is LNHHNNSENKNKNNNNNNNSNNNENSNNE. Residues 1412–1429 are compositionally biased toward low complexity; sequence KNNNNNNNSNNNENSNNE. The Carrier domain occupies 2594-2671; it reads SDNEFIHSTI…QSIDIIKFGY (78 aa). At Ser2631 the chain carries O-(pantetheine 4'-phosphoryl)serine.

Requires pantetheine 4'-phosphate as cofactor.

Functionally, probable polyketide synthase. This Dictyostelium discoideum (Social amoeba) protein is Probable polyketide synthase 28 (pks28).